The sequence spans 287 residues: Protease HtpX (287 aa).

The next 2 membrane-spanning stretches (helical) occupy residues Ile4 to Ile24 and Gly33 to Ile53. His139 is a binding site for Zn(2+). Glu140 is an active-site residue. Zn(2+) is bound at residue His143. The next 2 membrane-spanning stretches (helical) occupy residues Leu154 to Ile174 and Ala195 to Phe215. Glu220 lines the Zn(2+) pocket.

The protein belongs to the peptidase M48B family. Zn(2+) is required as a cofactor.

The protein resides in the cell inner membrane. The sequence is that of Protease HtpX from Shewanella oneidensis (strain ATCC 700550 / JCM 31522 / CIP 106686 / LMG 19005 / NCIMB 14063 / MR-1).